We begin with the raw amino-acid sequence, 260 residues long: MLDKVKNVIVVLSGKGGVGKSTVSTQLSLALRKNGFKVGLLDIDLCGPSVPYLLGLEGRDIFQCDDGWVPVYTDESQTLAVMSIGFLLKNREDPVIWRGPKKTMMIRQFLTDVRWDELDYLIIDTPPGTSDEHITVMECLKEVGCHGAIIVTTPQEVALDDVRKEITFCKKTGINILGIVENMSGFVCPHCTSCTNIFSSNGGVSLATYAQVPHLGTLPIDPRVGILAGTTTSVLDELPDSTTAEVLTHIVEKLKTMLVS.

Gly14–Ser21 contributes to the ATP binding site. Residues Cys188 and Cys191 each contribute to the [4Fe-4S] cluster site.

Belongs to the Mrp/NBP35 ATP-binding proteins family. NUBP2/CFD1 subfamily. As to quaternary structure, heterotetramer of 2 Nubp1 and 2 Nubp2 chains. Requires [4Fe-4S] cluster as cofactor.

Its subcellular location is the cytoplasm. In terms of biological role, component of the cytosolic iron-sulfur (Fe/S) protein assembly (CIA) machinery. Required for maturation of extramitochondrial Fe-S proteins. The Nubp1-Nubp2 heterotetramer forms a Fe-S scaffold complex, mediating the de novo assembly of an Fe-S cluster and its transfer to target apoproteins. This chain is Cytosolic Fe-S cluster assembly factor Nubp2 homolog, found in Drosophila melanogaster (Fruit fly).